A 341-amino-acid chain; its full sequence is Ras association domain-containing protein 6 (341 aa).

Phosphoserine is present on Ser155. One can recognise a Ras-associating domain in the interval 190–278; the sequence is YDHETSIFTP…ARIFLMDKDA (89 aa). The SARAH domain occupies 285–332; the sequence is VAPYINFHFSFLKSILQRLDEEEKMEIERIMAKFNTERAFILKCLQSK.

Interacts with MOAP1. Interaction with activated KRAS is still a matter of debate.

In terms of biological role, involved in the induction of apoptosis. May act as a Ras effector protein. May suppress the serum-induced basal levels of NF-kappa-B. In Rattus norvegicus (Rat), this protein is Ras association domain-containing protein 6 (Rassf6).